The following is a 617-amino-acid chain: Na(+)/H(+) antiporter NhaA 1 (617 aa).

The disordered stretch occupies residues 1 to 26 (MTVTEPATQRGFPLLPSRLSRGSKAT). Residues 1-433 (MTVTEPATQR…GWAIFRITDW (433 aa)) form a na(+)/H(+) antiporter NhaA region. Helical transmembrane passes span 33 to 53 (AAALLLTFTVVAILWANSPWA), 75 to 95 (MTVKHVVNDALMTFFFFIVGL), 113 to 133 (AVPVVAAAAGLILPAVVFLAF), 141 to 161 (HAWGVVISTDTAFLVGALAII), 171 to 191 (LFLLTLAVVDDVGALIAIAVL), 198 to 218 (VAPLVVAVALLGALALVRYLP), 234 to 254 (IALYLAGIHPTLAGVAVALLI), 304 to 324 (VSPVVSFVILPLFALVNAGVL), 341 to 361 (GIVAGLVVGKFVGIAGATWLI), 378 to 398 (IAGGAALSGIGFTISLFIVDI), and 411 to 431 (IGVLAASVLAFALGWAIFRIT). The region spanning 434 to 617 (LSPPEPVGLK…LIRALEAGRG (184 aa)) is the Thioredoxin domain.

In the N-terminal section; belongs to the NhaA Na(+)/H(+) (TC 2.A.33) antiporter family.

Its subcellular location is the cell membrane. It catalyses the reaction Na(+)(in) + 2 H(+)(out) = Na(+)(out) + 2 H(+)(in). In terms of biological role, na(+)/H(+) antiporter that extrudes sodium in exchange for external protons. This is Na(+)/H(+) antiporter NhaA 1 from Mycolicibacterium gilvum (strain PYR-GCK) (Mycobacterium gilvum (strain PYR-GCK)).